Here is a 210-residue protein sequence, read N- to C-terminus: Probable GTP-binding protein EngB (210 aa).

One can recognise an EngB-type G domain in the interval 30–204 (QGYEVAFAGR…YRVLADWMEL (175 aa)). GTP is bound by residues 38 to 45 (GRSNAGKS), 64 to 68 (GRTQL), 82 to 85 (DLPG), 149 to 152 (TKAD), and 182 to 185 (LFSA). Positions 45 and 66 each coordinate Mg(2+).

The protein belongs to the TRAFAC class TrmE-Era-EngA-EngB-Septin-like GTPase superfamily. EngB GTPase family. It depends on Mg(2+) as a cofactor.

In terms of biological role, necessary for normal cell division and for the maintenance of normal septation. In Pseudomonas putida (strain ATCC 700007 / DSM 6899 / JCM 31910 / BCRC 17059 / LMG 24140 / F1), this protein is Probable GTP-binding protein EngB.